Consider the following 119-residue polypeptide: Large ribosomal subunit protein uL18 (119 aa).

The protein belongs to the universal ribosomal protein uL18 family. In terms of assembly, part of the 50S ribosomal subunit; part of the 5S rRNA/L5/L18/L25 subcomplex. Contacts the 5S and 23S rRNAs.

Its function is as follows. This is one of the proteins that bind and probably mediate the attachment of the 5S RNA into the large ribosomal subunit, where it forms part of the central protuberance. The protein is Large ribosomal subunit protein uL18 of Jannaschia sp. (strain CCS1).